The chain runs to 671 residues: DNA ligase (671 aa).

NAD(+)-binding positions include 32–36 (DAEYD), 81–82 (SL), and Glu113. Lys115 functions as the N6-AMP-lysine intermediate in the catalytic mechanism. Positions 136, 173, 290, and 314 each coordinate NAD(+). Zn(2+) contacts are provided by Cys408, Cys411, Cys426, and Cys432. Residues 593 to 671 (EIDSPFAGKT…EAEMIRLLGA (79 aa)) form the BRCT domain.

It belongs to the NAD-dependent DNA ligase family. LigA subfamily. It depends on Mg(2+) as a cofactor. Mn(2+) serves as cofactor.

The catalysed reaction is NAD(+) + (deoxyribonucleotide)n-3'-hydroxyl + 5'-phospho-(deoxyribonucleotide)m = (deoxyribonucleotide)n+m + AMP + beta-nicotinamide D-nucleotide.. DNA ligase that catalyzes the formation of phosphodiester linkages between 5'-phosphoryl and 3'-hydroxyl groups in double-stranded DNA using NAD as a coenzyme and as the energy source for the reaction. It is essential for DNA replication and repair of damaged DNA. The polypeptide is DNA ligase (Salmonella gallinarum (strain 287/91 / NCTC 13346)).